Here is a 574-residue protein sequence, read N- to C-terminus: Laccase-12 (574 aa).

A signal peptide spans 1–27 (MAAASSVLRCCLLVAALMTLSAMGAEA). Plastocyanin-like domains are found at residues 35–151 (DVQT…PPAG) and 161–314 (EEVP…YDDP). Residue Asn-81 is glycosylated (N-linked (GlcNAc...) asparagine). 4 residues coordinate Cu cation: His-85, His-87, His-130, and His-132. Residues Asn-173, Asn-190, Asn-206, Asn-242, Asn-302, Asn-335, Asn-342, Asn-381, Asn-388, Asn-398, Asn-434, Asn-441, and Asn-447 are each glycosylated (N-linked (GlcNAc...) asparagine). The region spanning 424 to 558 (NFPYYPLNPF…KMAWLVLDGS (135 aa)) is the Plastocyanin-like 3 domain. Positions 475, 478, 480, 537, 538, 539, and 543 each coordinate Cu cation.

This sequence belongs to the multicopper oxidase family. The cofactor is Cu cation.

The protein resides in the secreted. Its subcellular location is the extracellular space. It localises to the apoplast. It catalyses the reaction 4 hydroquinone + O2 = 4 benzosemiquinone + 2 H2O. Functionally, lignin degradation and detoxification of lignin-derived products. The chain is Laccase-12 (LAC12) from Oryza sativa subsp. japonica (Rice).